A 1484-amino-acid polypeptide reads, in one-letter code: Ral GTPase-activating protein subunit beta (1484 aa).

Disordered stretches follow at residues 355-437 (PRSD…APRR) and 699-728 (ENNLKSHSRTNSGISSASGGSTEPTTPDSE). Serine 359 carries the post-translational modification Phosphoserine. Phosphothreonine is present on residues threonine 363 and threonine 379. Composition is skewed to polar residues over residues 369-381 (SMPQSAAVNTTPP), 392-428 (NKATMKTSTVTTAHTSKVQHQASSTSPLSSPNQTSSE), and 701-725 (NLKSHSRTNSGISSASGGSTEPTTP). 2 positions are modified to phosphoserine: serine 421 and serine 710. Threonine 724 carries the post-translational modification Phosphothreonine. The Rap-GAP domain occupies 1138 to 1382 (IGYLDLLPCR…TTLEKEVPVI (245 aa)). Position 1275 is a phosphoserine (serine 1275). Positions 1297 to 1325 (PNHTDSLNSSQRLSPSSRMKKLPQGRPVP) are disordered. A compositionally biased stretch (low complexity) spans 1302-1313 (SLNSSQRLSPSS).

As to quaternary structure, component of the heterodimeric RalGAP1 complex with RALGAPA1 and of the heterodimeric RalGAP2 complex with RALGAPA2. Heterodimerization is required for activity. Abundantly expressed in testis, pancreas, lung, thymus, brown fat, and white fat. Expressed at lower levels in the brain.

Non-catalytic subunit of the heterodimeric RalGAP1 and RalGAP2 complexes which act as GTPase activators for the Ras-like small GTPases RALA and RALB. The chain is Ral GTPase-activating protein subunit beta (Ralgapb) from Mus musculus (Mouse).